Here is a 253-residue protein sequence, read N- to C-terminus: uncharacterized protein (253 aa).

The 207-residue stretch at 30–236 folds into the BPL/LPL catalytic domain; it reads AQGRQVAQLW…AVDDDAALMA (207 aa).

This is an uncharacterized protein from Cupriavidus necator (strain ATCC 17699 / DSM 428 / KCTC 22496 / NCIMB 10442 / H16 / Stanier 337) (Ralstonia eutropha).